The following is a 476-amino-acid chain: Angiotensinogen (476 aa).

Residues 1–24 (MAPAGLSLGAAILCLLAWAGLAAG) form the signal peptide. Cys-42 and Cys-161 are oxidised to a cystine. N-linked (GlcNAc...) asparagine glycans are attached at residues Asn-295, Asn-319, Asn-362, and Asn-401.

It belongs to the serpin family. In terms of processing, in response to low blood pressure, the enzyme renin/REN cleaves angiotensinogen to produce angiotensin-1. Angiotensin-1 is a substrate of ACE (angiotensin converting enzyme) that removes a dipeptide to yield the physiologically active peptide angiotensin-2. Angiotensin-1 and angiotensin-2 can be further processed to generate angiotensin-3, angiotensin-4. Angiotensin 1-9 is cleaved from angiotensin-1 by ACE2 and can be further processed by ACE to produce angiotensin 1-7, angiotensin 1-5 and angiotensin 1-4. Angiotensin 1-7 has also been proposed to be cleaved from angiotensin-2 by ACE2 or from angiotensin-1 by MME (neprilysin). The disulfide bond is labile. Angiotensinogen is present in the circulation in a near 40:60 ratio with the oxidized disulfide-bonded form, which preferentially interacts with receptor-bound renin.

The protein resides in the secreted. Functionally, essential component of the renin-angiotensin system (RAS), a potent regulator of blood pressure, body fluid and electrolyte homeostasis. Its function is as follows. Acts directly on vascular smooth muscle as a potent vasoconstrictor, affects cardiac contractility and heart rate through its action on the sympathetic nervous system, and alters renal sodium and water absorption through its ability to stimulate the zona glomerulosa cells of the adrenal cortex to synthesize and secrete aldosterone. Acts by binding to angiotensin receptors AGTR1 and AGTR2. Also binds the DEAR/FBXW7-AS1 receptor. In terms of biological role, stimulates aldosterone release. Is a ligand for the G-protein coupled receptor MAS1. Has vasodilator and antidiuretic effects. Has an antithrombotic effect that involves MAS1-mediated release of nitric oxide from platelets. The sequence is that of Angiotensinogen (AGT) from Bos taurus (Bovine).